The sequence spans 380 residues: Beta sliding clamp (380 aa).

Belongs to the beta sliding clamp family. Forms a ring-shaped head-to-tail homodimer around DNA which binds and tethers DNA polymerases and other proteins to the DNA. The DNA replisome complex has a single clamp-loading complex (3 tau and 1 each of delta, delta', psi and chi subunits) which binds 3 Pol III cores (1 core on the leading strand and 2 on the lagging strand) each with a beta sliding clamp dimer. Additional proteins in the replisome are other copies of gamma, psi and chi, Ssb, DNA helicase and RNA primase.

Its subcellular location is the cytoplasm. Functionally, confers DNA tethering and processivity to DNA polymerases and other proteins. Acts as a clamp, forming a ring around DNA (a reaction catalyzed by the clamp-loading complex) which diffuses in an ATP-independent manner freely and bidirectionally along dsDNA. Initially characterized for its ability to contact the catalytic subunit of DNA polymerase III (Pol III), a complex, multichain enzyme responsible for most of the replicative synthesis in bacteria; Pol III exhibits 3'-5' exonuclease proofreading activity. The beta chain is required for initiation of replication as well as for processivity of DNA replication. This chain is Beta sliding clamp (dnaN), found in Halalkalibacterium halodurans (strain ATCC BAA-125 / DSM 18197 / FERM 7344 / JCM 9153 / C-125) (Bacillus halodurans).